The primary structure comprises 185 residues: uncharacterized protein (185 aa).

This is an uncharacterized protein from Acanthamoeba polyphaga (Amoeba).